The chain runs to 180 residues: Crossover junction endodeoxyribonuclease RuvC (180 aa).

Catalysis depends on residues Asp-7, Glu-66, and Asp-138. The Mg(2+) site is built by Asp-7, Glu-66, and Asp-138.

Belongs to the RuvC family. As to quaternary structure, homodimer which binds Holliday junction (HJ) DNA. The HJ becomes 2-fold symmetrical on binding to RuvC with unstacked arms; it has a different conformation from HJ DNA in complex with RuvA. In the full resolvosome a probable DNA-RuvA(4)-RuvB(12)-RuvC(2) complex forms which resolves the HJ. Mg(2+) serves as cofactor.

It is found in the cytoplasm. It catalyses the reaction Endonucleolytic cleavage at a junction such as a reciprocal single-stranded crossover between two homologous DNA duplexes (Holliday junction).. In terms of biological role, the RuvA-RuvB-RuvC complex processes Holliday junction (HJ) DNA during genetic recombination and DNA repair. Endonuclease that resolves HJ intermediates. Cleaves cruciform DNA by making single-stranded nicks across the HJ at symmetrical positions within the homologous arms, yielding a 5'-phosphate and a 3'-hydroxyl group; requires a central core of homology in the junction. The consensus cleavage sequence is 5'-(A/T)TT(C/G)-3'. Cleavage occurs on the 3'-side of the TT dinucleotide at the point of strand exchange. HJ branch migration catalyzed by RuvA-RuvB allows RuvC to scan DNA until it finds its consensus sequence, where it cleaves and resolves the cruciform DNA. This is Crossover junction endodeoxyribonuclease RuvC from Paraburkholderia phytofirmans (strain DSM 17436 / LMG 22146 / PsJN) (Burkholderia phytofirmans).